A 337-amino-acid polypeptide reads, in one-letter code: tRNA N6-adenosine threonylcarbamoyltransferase (337 aa).

The Fe cation site is built by H114 and H118. Residues 136 to 140 (LVSGG), D169, G182, D186, and N275 each bind substrate. D301 provides a ligand contact to Fe cation.

This sequence belongs to the KAE1 / TsaD family. Fe(2+) serves as cofactor.

The protein localises to the cytoplasm. The catalysed reaction is L-threonylcarbamoyladenylate + adenosine(37) in tRNA = N(6)-L-threonylcarbamoyladenosine(37) in tRNA + AMP + H(+). Required for the formation of a threonylcarbamoyl group on adenosine at position 37 (t(6)A37) in tRNAs that read codons beginning with adenine. Is involved in the transfer of the threonylcarbamoyl moiety of threonylcarbamoyl-AMP (TC-AMP) to the N6 group of A37, together with TsaE and TsaB. TsaD likely plays a direct catalytic role in this reaction. This is tRNA N6-adenosine threonylcarbamoyltransferase from Streptococcus uberis (strain ATCC BAA-854 / 0140J).